We begin with the raw amino-acid sequence, 508 residues long: Erythropoietin receptor (508 aa).

The N-terminal stretch at 1-24 is a signal peptide; sequence MDHLGASLWPQVGSLCLLLAGAAW. At 25–250 the chain is on the extracellular side; it reads APPPNLPDPK…SLLTPSDLDP (226 aa). Cys52 and Cys62 are oxidised to a cystine. The N-linked (GlcNAc...) asparagine glycan is linked to Asn76. Cys91 and Cys107 are disulfide-bonded. One can recognise a Fibronectin type-III domain in the interval 147–247; that stretch reads APVGLVARLA…EPVSLLTPSD (101 aa). The short motif at 233–237 is the WSXWS motif element; the sequence is WSAWS. A helical transmembrane segment spans residues 251–273; it reads LILTLSLILVVILVLLTVLALLS. Over 274-508 the chain is Cytoplasmic; that stretch reads HRRALKQKIW…PLPPSYVACS (235 aa). A Glycyl lysine isopeptide (Lys-Gly) (interchain with G-Cter in ubiquitin) cross-link involves residue Lys281. A Box 1 motif motif is present at residues 282-290; it reads IWPGIPSPE. Residues Tyr368 and Tyr426 each carry the phosphotyrosine; by JAK2 modification. Residues 452-457 carry the ITIM motif motif; that stretch reads LKYLYL. A Glycyl lysine isopeptide (Lys-Gly) (interchain with G-Cter in ubiquitin) cross-link involves residue Lys453. Residues Tyr454, Tyr456, Tyr468, Tyr485, Tyr489, and Tyr504 each carry the phosphotyrosine; by JAK2 modification. The interval 454–456 is required for high-affinity SOCS3 binding; it reads YLY. Positions 467–494 are disordered; that stretch reads DYSSGDSQGAQGGLSDGPYSNPYENSLI.

Belongs to the type I cytokine receptor family. Type 1 subfamily. As to quaternary structure, forms homodimers on EPO stimulation. The tyrosine-phosphorylated form interacts with several SH2 domain-containing proteins including LYN, the adapter protein SH2B2, PTPN6, PTPN11, JAK2, PI3 kinases, STAT5A/B, SOCS3, CRKL. Interacts with INPP5D/SHIP1. SH2B2 binding inhibits the JAK-STAT signaling. Interacts with RHEX; this interaction occurs in a erythropoietin (EPO)-dependent manner. Interacts with ATXN2L. On EPO stimulation, phosphorylated on C-terminal tyrosine residues by JAK2. The phosphotyrosine motifs are also recruitment sites for several SH2-containing proteins and adapter proteins which mediate cell proliferation. Phosphorylation on Tyr-454 is required for PTPN6 interaction, Tyr-426 for PTPN11. Tyr-426 is also required for SOCS3 binding, but Tyr-454/Tyr-456 motif is the preferred binding site. Post-translationally, ubiquitinated by the ECS(SOCS2) complex following ligand-binding and phosphorylation by JAK2, leading to its degradation by the proteasome. Regulation by the ECS(SOCS2) complex acts as a negative feedback loop of erythropoietin-mediated signaling pathway. Ubiquitination at Lys-281 mediates receptor internalization, whereas ubiquitination at Lys-453 promotes trafficking of activated receptors to the lysosomes for degradation. Ubiquitinated by NOSIP; appears to be either multi-monoubiquitinated or polyubiquitinated. Ubiquitination mediates proliferation and survival of EPO-dependent cells. Erythroid cells and erythroid progenitor cells. In terms of tissue distribution, isoform EPOR-F is the most abundant form in EPO-dependent erythroleukemia cells and in late-stage erythroid progenitors. As to expression, isoform EPOR-S and isoform EPOR-T are the predominant forms in bone marrow. Isoform EPOR-S and isoform EPOR-T are the predominant forms in bone marrow. Isoform EPOR-T is the most abundant from in early-stage erythroid progenitor cells.

It is found in the cell membrane. The protein resides in the secreted. Receptor for erythropoietin, which mediates erythropoietin-induced erythroblast proliferation and differentiation. Upon EPO stimulation, EPOR dimerizes triggering the JAK2/STAT5 signaling cascade. In some cell types, can also activate STAT1 and STAT3. May also activate the LYN tyrosine kinase. In terms of biological role, acts as a dominant-negative receptor of EPOR-mediated signaling. The chain is Erythropoietin receptor from Homo sapiens (Human).